We begin with the raw amino-acid sequence, 221 residues long: MKCLFLLCLCLFPIVVFSSTFTSQNPINLPSDATPVLDVTGKELDPRLSYHIISTFWGALGGDVYLGKSPNSDAPCANGIFRYNSDVGPSGTPVRFIGSSSHFGQGIFENELLNIQFAISTSKLCVSYTIWKVGDYDASLGTMLLETGGTIGQADSSWFKIVQSSQFGYNLLYCPVTSTMSCPFSSDDQFCLKVGVVHQNGKRRLALVKDNPLDVSFKQVQ.

Positions 1 to 22 (MKCLFLLCLCLFPIVVFSSTFT) are cleaved as a signal peptide. The propeptide occupies 23–28 (SQNPIN). Residues 25-30 (NPINLP) carry the Vacuolar targeting signal motif. 2 disulfide bridges follow: Cys76–Cys125 and Cys174–Cys191.

Belongs to the protease inhibitor I3 (leguminous Kunitz-type inhibitor) family.

It localises to the vacuole. Functionally, inhibitor of trypsin (serine protease). May protect the plant by inhibiting proteases of invading organisms. This is Probable serine protease inhibitor 6 from Solanum tuberosum (Potato).